The following is a 250-amino-acid chain: 3-deoxy-manno-octulosonate cytidylyltransferase (250 aa).

It belongs to the KdsB family.

The protein resides in the cytoplasm. It catalyses the reaction 3-deoxy-alpha-D-manno-oct-2-ulosonate + CTP = CMP-3-deoxy-beta-D-manno-octulosonate + diphosphate. It participates in nucleotide-sugar biosynthesis; CMP-3-deoxy-D-manno-octulosonate biosynthesis; CMP-3-deoxy-D-manno-octulosonate from 3-deoxy-D-manno-octulosonate and CTP: step 1/1. The protein operates within bacterial outer membrane biogenesis; lipopolysaccharide biosynthesis. In terms of biological role, activates KDO (a required 8-carbon sugar) for incorporation into bacterial lipopolysaccharide in Gram-negative bacteria. This chain is 3-deoxy-manno-octulosonate cytidylyltransferase, found in Azorhizobium caulinodans (strain ATCC 43989 / DSM 5975 / JCM 20966 / LMG 6465 / NBRC 14845 / NCIMB 13405 / ORS 571).